The chain runs to 278 residues: Protein lyl-1 (278 aa).

The segment at 1-46 is disordered; sequence MCPPQARAEVGSAMTEKTEMVCASSPAPAPPSKPASPGPLSTEEVD. Pro residues predominate over residues 27-37; that stretch reads APAPPSKPASP. One can recognise a bHLH domain in the interval 149–201; the sequence is ARRVFTNSRERWRQQHVNGAFAELRKLLPTHPPDRKLSKNEVLRLAMKYIGFL. The interval 212–278 is disordered; that stretch reads LTSGPSAPGS…EQTSLSPEVR (67 aa). Over residues 269 to 278 the composition is skewed to polar residues; that stretch reads EQTSLSPEVR. Phosphoserine is present on Ser-274.

In terms of assembly, efficient DNA binding requires dimerization with another bHLH protein.

It localises to the nucleus. The protein is Protein lyl-1 (Lyl1) of Mus musculus (Mouse).